Reading from the N-terminus, the 214-residue chain is Pyrrolidone-carboxylate peptidase (214 aa).

Catalysis depends on residues Glu79, Cys142, and His166.

Belongs to the peptidase C15 family. As to quaternary structure, homotetramer.

Its subcellular location is the cytoplasm. The catalysed reaction is Release of an N-terminal pyroglutamyl group from a polypeptide, the second amino acid generally not being Pro.. Functionally, removes 5-oxoproline from various penultimate amino acid residues except L-proline. In Fusobacterium nucleatum subsp. nucleatum (strain ATCC 25586 / DSM 15643 / BCRC 10681 / CIP 101130 / JCM 8532 / KCTC 2640 / LMG 13131 / VPI 4355), this protein is Pyrrolidone-carboxylate peptidase.